A 156-amino-acid chain; its full sequence is ATP synthase subunit b (156 aa).

The helical transmembrane segment at 7–29 (LIGQLIAFALFTWFCVKFVWPPI) threads the bilayer.

Belongs to the ATPase B chain family. In terms of assembly, F-type ATPases have 2 components, F(1) - the catalytic core - and F(0) - the membrane proton channel. F(1) has five subunits: alpha(3), beta(3), gamma(1), delta(1), epsilon(1). F(0) has three main subunits: a(1), b(2) and c(10-14). The alpha and beta chains form an alternating ring which encloses part of the gamma chain. F(1) is attached to F(0) by a central stalk formed by the gamma and epsilon chains, while a peripheral stalk is formed by the delta and b chains.

It is found in the cell inner membrane. In terms of biological role, f(1)F(0) ATP synthase produces ATP from ADP in the presence of a proton or sodium gradient. F-type ATPases consist of two structural domains, F(1) containing the extramembraneous catalytic core and F(0) containing the membrane proton channel, linked together by a central stalk and a peripheral stalk. During catalysis, ATP synthesis in the catalytic domain of F(1) is coupled via a rotary mechanism of the central stalk subunits to proton translocation. Its function is as follows. Component of the F(0) channel, it forms part of the peripheral stalk, linking F(1) to F(0). The sequence is that of ATP synthase subunit b from Mannheimia succiniciproducens (strain KCTC 0769BP / MBEL55E).